The primary structure comprises 666 residues: Probable potassium transport system protein Kup (666 aa).

Helical transmembrane passes span 53–73 (FWAL…TSPL), 89–109 (VTPV…FIVV), 144–164 (LLLL…SMIT), 181–201 (PEFG…LFAV), 212–232 (AFAP…ALHI), 247–267 (AIHF…LVFL), 291–311 (WFCL…ALIL), 324–344 (LAPA…TVIA), 381–401 (IYLP…VLLF), 411–431 (YGIA…VVVW), 441–461 (AAAL…ANLL), and 463–483 (LLDG…LIWT).

Belongs to the HAK/KUP transporter (TC 2.A.72) family.

It localises to the cell inner membrane. The enzyme catalyses K(+)(in) + H(+)(in) = K(+)(out) + H(+)(out). Its function is as follows. Transport of potassium into the cell. Likely operates as a K(+):H(+) symporter. The chain is Probable potassium transport system protein Kup from Nitrobacter hamburgensis (strain DSM 10229 / NCIMB 13809 / X14).